The primary structure comprises 445 residues: 3-phosphoshikimate 1-carboxyvinyltransferase (445 aa).

A disordered region spans residues 1–24 (MEHAATLPQTSRRPATPLTGTITV). Positions 7-22 (LPQTSRRPATPLTGTI) are enriched in polar residues. Residues Lys-28, Ser-29, and Arg-33 each coordinate 3-phosphoshikimate. Phosphoenolpyruvate is bound at residue Lys-28. Phosphoenolpyruvate-binding residues include Gly-101 and Arg-129. Residues Ser-174, Gln-176, Asp-326, and Lys-353 each coordinate 3-phosphoshikimate. Phosphoenolpyruvate is bound at residue Gln-176. Asp-326 functions as the Proton acceptor in the catalytic mechanism. 2 residues coordinate phosphoenolpyruvate: Arg-357 and Arg-399.

This sequence belongs to the EPSP synthase family. Monomer.

Its subcellular location is the cytoplasm. The catalysed reaction is 3-phosphoshikimate + phosphoenolpyruvate = 5-O-(1-carboxyvinyl)-3-phosphoshikimate + phosphate. The protein operates within metabolic intermediate biosynthesis; chorismate biosynthesis; chorismate from D-erythrose 4-phosphate and phosphoenolpyruvate: step 6/7. Its function is as follows. Catalyzes the transfer of the enolpyruvyl moiety of phosphoenolpyruvate (PEP) to the 5-hydroxyl of shikimate-3-phosphate (S3P) to produce enolpyruvyl shikimate-3-phosphate and inorganic phosphate. The sequence is that of 3-phosphoshikimate 1-carboxyvinyltransferase from Acidiphilium cryptum (strain JF-5).